We begin with the raw amino-acid sequence, 374 residues long: Chaperone protein DnaJ (374 aa).

In terms of domain architecture, J spans 5–70 (DFYEILGVSK…EKRSAYDRMG (66 aa)). The segment at 133 to 211 (GCKKEISFTA…CHGNGVKDKS (79 aa)) adopts a CR-type zinc-finger fold. Residues C146, C149, C163, C166, C185, C188, C199, and C202 each coordinate Zn(2+). CXXCXGXG motif repeat units follow at residues 146-153 (CDTCDGKG), 163-170 (CQTCHGQG), 185-192 (CPHCGGTG), and 199-206 (CSDCHGNG).

This sequence belongs to the DnaJ family. Homodimer. Zn(2+) is required as a cofactor.

It localises to the cytoplasm. Functionally, participates actively in the response to hyperosmotic and heat shock by preventing the aggregation of stress-denatured proteins and by disaggregating proteins, also in an autonomous, DnaK-independent fashion. Unfolded proteins bind initially to DnaJ; upon interaction with the DnaJ-bound protein, DnaK hydrolyzes its bound ATP, resulting in the formation of a stable complex. GrpE releases ADP from DnaK; ATP binding to DnaK triggers the release of the substrate protein, thus completing the reaction cycle. Several rounds of ATP-dependent interactions between DnaJ, DnaK and GrpE are required for fully efficient folding. Also involved, together with DnaK and GrpE, in the DNA replication of plasmids through activation of initiation proteins. The chain is Chaperone protein DnaJ from Psychrobacter arcticus (strain DSM 17307 / VKM B-2377 / 273-4).